The following is a 234-amino-acid chain: Small ribosomal subunit protein uS2 (234 aa).

It belongs to the universal ribosomal protein uS2 family.

This Clostridium kluyveri (strain NBRC 12016) protein is Small ribosomal subunit protein uS2.